The sequence spans 285 residues: MAQSRLFFSADKAEAERTYNILEQAFEDDGFPIAITEIDEDRQIFEVSVYVEDDAEEVAARVDALVGPGLFDTEELPDIDWVTHSLEGLKPVRAGHFFVHGSHDRDKIEPGDIAIEIDAGLAFGTGHHGTTAGCLELIEETVETEHPTNALDLGTGSAVLAIAIARLAPIPILATDIDPIAVTVAAENAAKNGVAEHIVTATAEGFGHPIFRSYSPFDLIVANILANPLIELAPSIKEHLAPGGSIILSGILDSQHDAVLAAYQTQGLTHQKTLHREGWVAIHLT.

The S-adenosyl-L-methionine site is built by Thr131, Gly154, Asp176, and Asn223.

It belongs to the methyltransferase superfamily. PrmA family.

Its subcellular location is the cytoplasm. The catalysed reaction is L-lysyl-[protein] + 3 S-adenosyl-L-methionine = N(6),N(6),N(6)-trimethyl-L-lysyl-[protein] + 3 S-adenosyl-L-homocysteine + 3 H(+). Methylates ribosomal protein L11. The chain is Ribosomal protein L11 methyltransferase from Brucella abortus (strain S19).